We begin with the raw amino-acid sequence, 207 residues long: Transcription factor DYT1 (207 aa).

The tract at residues 1 to 38 is disordered; sequence MGGGSRFQEPVRMSRRKQVTKEKEEDENFKSPNLEAER. Residues 28-77 enclose the bHLH domain; it reads NFKSPNLEAERRRREKLHCRLMALRSHVPIVTNMTKASIVEDAITYIGEL.

As to quaternary structure, homodimer. Mostly expressed in anthers, and, to a lower extent, in young inflorescences undergoing meiosis and siliques.

The protein localises to the nucleus. Its function is as follows. Transcription factor. Involved in the control of tapetum development. Required for male fertility and pollen differentiation, especially during callose deposition. In Arabidopsis thaliana (Mouse-ear cress), this protein is Transcription factor DYT1.